The sequence spans 245 residues: Probable phosphatase Spro_1934 (245 aa).

Residues His-7, His-9, His-15, His-40, Glu-73, His-101, His-131, Asp-192, and His-194 each contribute to the Zn(2+) site.

Belongs to the PHP family. Homotrimer. Zn(2+) serves as cofactor.

This chain is Probable phosphatase Spro_1934, found in Serratia proteamaculans (strain 568).